Here is a 219-residue protein sequence, read N- to C-terminus: MAMFYAHALGGYDENLHAFPGISSTVANDVRKYSVVSVYNNKYDIVKDKYMWCYSQVNKRYIGALLPMFECNEYLQIGDPIHDQEGNQISIITYRHKNYYALSGIGYESLDLCLEGVGIHHHVLETGNAVYGKVQHDYSTIKEKAKEMNALSPGPIIDYHVWIGDCICQVTAVDVHGKEIMRMRFKKGAVLPIPNLVKVKLGENDTENLSSTISAAPSR.

H17 acts as the Proton donor in catalysis. The active-site Shared with catalytic histidine of dimeric partner is Y138. Residue K142 is the Proton acceptor; shared with catalytic histidine of dimeric partner of the active site.

This sequence belongs to the poxin family. As to quaternary structure, homodimer.

It carries out the reaction 2',3'-cGAMP + H2O = Gp(2'-5')Ap(3') + H(+). Functionally, nuclease that is responsible for viral evasion of host cGAS-STING innate immunity. Cleaves 2',3'-cGAMP which is produced by host cGAS following recognition of cytosolic DNA and blocks the subsequent 2',3'-cGAMP-mediated activation of TMEM173/STING, which normally spreads to adjacent cells and activates the interferon and NF-kappa-B immune responses. The polypeptide is Poxin (OPG188) (Bos taurus (Bovine)).